The following is a 512-amino-acid chain: Maturase K (512 aa).

It belongs to the intron maturase 2 family. MatK subfamily.

Its subcellular location is the plastid. It localises to the chloroplast. Functionally, usually encoded in the trnK tRNA gene intron. Probably assists in splicing its own and other chloroplast group II introns. The sequence is that of Maturase K from Piper cenocladum (Ant piper).